A 226-amino-acid polypeptide reads, in one-letter code: UPF0173 metal-dependent hydrolase CHY_0920 (226 aa).

It belongs to the UPF0173 family.

In Carboxydothermus hydrogenoformans (strain ATCC BAA-161 / DSM 6008 / Z-2901), this protein is UPF0173 metal-dependent hydrolase CHY_0920.